We begin with the raw amino-acid sequence, 260 residues long: Small ribosomal subunit protein uS3 (260 aa).

Residues 39–114 (LRQYIEQKLG…QIRINVVEVQ (76 aa)) form the KH type-2 domain. Residues 218 to 260 (QEVATPPPSPRDRDRDRGDRDREPRRRQQQRRRQQFEDRSNEG) are disordered. Basic and acidic residues-rich tracts occupy residues 227 to 243 (PRDRDRDRGDRDREPRR) and 251 to 260 (QQFEDRSNEG).

The protein belongs to the universal ribosomal protein uS3 family. In terms of assembly, part of the 30S ribosomal subunit. Forms a tight complex with proteins S10 and S14.

In terms of biological role, binds the lower part of the 30S subunit head. Binds mRNA in the 70S ribosome, positioning it for translation. The sequence is that of Small ribosomal subunit protein uS3 from Nostoc sp. (strain PCC 7120 / SAG 25.82 / UTEX 2576).